We begin with the raw amino-acid sequence, 365 residues long: 2-aminoethylphosphonate--pyruvate transaminase (365 aa).

Lysine 194 is subject to N6-(pyridoxal phosphate)lysine.

It belongs to the class-V pyridoxal-phosphate-dependent aminotransferase family. PhnW subfamily. In terms of assembly, homodimer. It depends on pyridoxal 5'-phosphate as a cofactor.

It carries out the reaction (2-aminoethyl)phosphonate + pyruvate = phosphonoacetaldehyde + L-alanine. Functionally, involved in phosphonate degradation. In Bacillus thuringiensis (strain Al Hakam), this protein is 2-aminoethylphosphonate--pyruvate transaminase.